Here is a 169-residue protein sequence, read N- to C-terminus: Putative hydrogenase maturation protease MJ0631 (169 aa).

It belongs to the peptidase A31 family.

The protein is Putative hydrogenase maturation protease MJ0631 of Methanocaldococcus jannaschii (strain ATCC 43067 / DSM 2661 / JAL-1 / JCM 10045 / NBRC 100440) (Methanococcus jannaschii).